The sequence spans 198 residues: dTTP/UTP pyrophosphatase (198 aa).

Catalysis depends on Asp-78, which acts as the Proton acceptor.

Belongs to the Maf family. YhdE subfamily. The cofactor is a divalent metal cation.

The protein resides in the cytoplasm. It catalyses the reaction dTTP + H2O = dTMP + diphosphate + H(+). The catalysed reaction is UTP + H2O = UMP + diphosphate + H(+). Its function is as follows. Nucleoside triphosphate pyrophosphatase that hydrolyzes dTTP and UTP. May have a dual role in cell division arrest and in preventing the incorporation of modified nucleotides into cellular nucleic acids. This Chromobacterium violaceum (strain ATCC 12472 / DSM 30191 / JCM 1249 / CCUG 213 / NBRC 12614 / NCIMB 9131 / NCTC 9757 / MK) protein is dTTP/UTP pyrophosphatase.